The primary structure comprises 253 residues: MNEQGKAINSSAESRIQLESSWKAHVGNWLLRPEMRDLSSFLRARKVAGVSVYPPGSQIFAAFEATPFQRVKAVILGQDPYHGQGQAHGLCFSVRPGMPLPPSLLNIYKELEEDLGLLRPDHGCLLPWAKRGVLLLNAVLTVEDGRAGAHQGKGWEGFTDHVVDTLNREREGLVFMLWGSYAQAKGKAIDTRRHLVLKAPHPSPLSAHRGFLGCRHFSLCNQYLSQHGLGMVDWSLPPCIALDGAILNGRIAV.

The Proton acceptor role is filled by Asp-79.

The protein belongs to the uracil-DNA glycosylase (UDG) superfamily. UNG family.

Its subcellular location is the cytoplasm. It catalyses the reaction Hydrolyzes single-stranded DNA or mismatched double-stranded DNA and polynucleotides, releasing free uracil.. Its function is as follows. Excises uracil residues from the DNA which can arise as a result of misincorporation of dUMP residues by DNA polymerase or due to deamination of cytosine. The polypeptide is Uracil-DNA glycosylase (Xylella fastidiosa (strain M23)).